The following is a 172-amino-acid chain: Biogenesis of lysosome-related organelles complex 1 subunit 6 (172 aa).

Disordered regions lie at residues Met-1–Glu-36 and Arg-135–Met-172. Positions Asp-63 to Arg-167 form a coiled coil. Positions Arg-143–Leu-164 are enriched in basic and acidic residues.

Belongs to the BLOC1S6 family. Interacts with BLOC1S4 and DTNBP1/BLOC1S7. Homodimer. Component of the biogenesis of lysosome-related organelles complex 1 (BLOC-1) composed of BLOC1S1, BLOC1S2, BLOC1S3, BLOC1S4, BLOC1S5, BLOC1S6, DTNBP1/BLOC1S7 and SNAPIN/BLOC1S8. Octamer composed of one copy each BLOC1S1, BLOC1S2, BLOC1S3, BLOC1S4, BLOC1S5, BLOC1S6, DTNBP1/BLOC1S7 and SNAPIN/BLOC1S8. The BLOC-1 complex associates with the AP-3 protein complex and membrane protein cargos. Interacts with BLOC1S5, F-actin, SNAP25 isoform 1 and isoform 2, SNAP47 and STX12. In terms of processing, phosphorylated. In terms of tissue distribution, widely expressed.

It localises to the cytoplasm. The protein resides in the membrane. In terms of biological role, component of the BLOC-1 complex, a complex that is required for normal biogenesis of lysosome-related organelles (LRO), such as platelet dense granules and melanosomes. In concert with the AP-3 complex, the BLOC-1 complex is required to target membrane protein cargos into vesicles assembled at cell bodies for delivery into neurites and nerve terminals. The BLOC-1 complex, in association with SNARE proteins, is also proposed to be involved in neurite extension. May play a role in intracellular vesicle trafficking, particularly in the vesicle-docking and fusion process. The polypeptide is Biogenesis of lysosome-related organelles complex 1 subunit 6 (BLOC1S6) (Homo sapiens (Human)).